The primary structure comprises 329 residues: Malate dehydrogenase (329 aa).

12 to 18 is an NAD(+) binding site; that stretch reads GAAGQIG. The substrate site is built by Arg-93 and Arg-99. NAD(+) is bound by residues Asn-106, Gln-113, and 130–132; that span reads TGN. Substrate is bound by residues Asn-132 and Arg-163. Residue His-188 is the Proton acceptor of the active site.

This sequence belongs to the LDH/MDH superfamily. MDH type 2 family.

It catalyses the reaction (S)-malate + NAD(+) = oxaloacetate + NADH + H(+). Its function is as follows. Catalyzes the reversible oxidation of malate to oxaloacetate. The sequence is that of Malate dehydrogenase from Mycobacterium bovis (strain ATCC BAA-935 / AF2122/97).